Here is a 446-residue protein sequence, read N- to C-terminus: Ribosomal protein uS12 methylthiotransferase RimO (446 aa).

Positions 4 to 119 constitute an MTTase N-terminal domain; it reads LKVGLISLGC…LVENINNFIS (116 aa). [4Fe-4S] cluster is bound by residues Cys-13, Cys-48, Cys-82, Cys-157, Cys-161, and Cys-164. One can recognise a Radical SAM core domain in the interval 143–373; sequence TTKSHTAYLR…MMLQKHIIYS (231 aa). The TRAM domain occupies 376 to 442; the sequence is KYKIGNKYKV…EYDLVGVVYD (67 aa).

The protein belongs to the methylthiotransferase family. RimO subfamily. [4Fe-4S] cluster is required as a cofactor.

It localises to the cytoplasm. It carries out the reaction L-aspartate(89)-[ribosomal protein uS12]-hydrogen + (sulfur carrier)-SH + AH2 + 2 S-adenosyl-L-methionine = 3-methylsulfanyl-L-aspartate(89)-[ribosomal protein uS12]-hydrogen + (sulfur carrier)-H + 5'-deoxyadenosine + L-methionine + A + S-adenosyl-L-homocysteine + 2 H(+). Catalyzes the methylthiolation of an aspartic acid residue of ribosomal protein uS12. The polypeptide is Ribosomal protein uS12 methylthiotransferase RimO (Clostridium kluyveri (strain ATCC 8527 / DSM 555 / NBRC 12016 / NCIMB 10680 / K1)).